The sequence spans 520 residues: Keratin, type II cytoskeletal 78 (520 aa).

The head stretch occupies residues 1 to 110 (MSLSPCRAQR…DPQFQVVRTQ (110 aa)). A coil 1A region spans residues 111-146 (ETQEIRTLNNQFASFIDKVRFLEQQNKVLETKWHLL). One can recognise an IF rod domain in the interval 111–424 (ETQEIRTLNN…RLLEGEECRM (314 aa)). The linker 1 stretch occupies residues 147–165 (QQQGLSGSQQGLEPVFEAC). Positions 166–258 (LDQLRKQLEQ…LNEEELGQLQ (93 aa)) are coil 1B. A linker 12 region spans residues 259 to 281 (TQASDTSVVLSMDNNRYLDFSSI). Positions 282-421 (ITEVRARYEE…TYRRLLEGEE (140 aa)) are coil 2. Residues 422-520 (CRMSGECTSQ…ESSLKTSITY (99 aa)) are tail.

It belongs to the intermediate filament family. As to quaternary structure, heterotetramer of two type I and two type II keratins. In terms of tissue distribution, in non-keratinising esophageal and vaginal epithelium, strongly expressed in the basal and parabasal/lower suprabasal cell layers with considerably decreased expression in the mid/upper suprabasal layers (at protein level). A similar gradient from basal to lower suprabasal layers is seen in the partially keratinised dorsal tongue epithelium, in the scalp and in the plantar epidermis (at protein level). Extension of expression into the suprabasal compartments is distinctly more pronounced in non-keratinising epithelia than in keratinising epithelia and epidermis (at protein level). In scalp sections, present in the interfollicular epidermis and infundibulum including the entire outer root sheath of the hair follicles and also in the sebocytes (at protein level). In sweat glands, expressed in peripheral and luminal cells of the lower duct and in peripheral cells of the middle/upper duct with no expression observed in luminal cells (at protein level). In embryos at the 14th week of pregnancy, detected in basal and parabasal layers but is absent from the uppermost epidermal layer (at protein level). Expressed in tongue epithelium.

The chain is Keratin, type II cytoskeletal 78 (KRT78) from Homo sapiens (Human).